Reading from the N-terminus, the 270-residue chain is Regulatory protein RecX (270 aa).

It belongs to the RecX family.

It localises to the cytoplasm. Functionally, modulates RecA activity. The polypeptide is Regulatory protein RecX (Bacillus cereus (strain ZK / E33L)).